Here is a 505-residue protein sequence, read N- to C-terminus: 2,3-bisphosphoglycerate-independent phosphoglycerate mutase (505 aa).

Mn(2+) is bound by residues Asp-11 and Ser-61. The active-site Phosphoserine intermediate is the Ser-61. Substrate contacts are provided by residues His-122, 152 to 153 (RD), Arg-184, Arg-190, 258 to 261 (RPDR), and Lys-331. Residues Asp-396, His-400, Asp-437, His-438, and His-455 each coordinate Mn(2+).

It belongs to the BPG-independent phosphoglycerate mutase family. In terms of assembly, monomer. The cofactor is Mn(2+).

It catalyses the reaction (2R)-2-phosphoglycerate = (2R)-3-phosphoglycerate. The protein operates within carbohydrate degradation; glycolysis; pyruvate from D-glyceraldehyde 3-phosphate: step 3/5. Catalyzes the interconversion of 2-phosphoglycerate and 3-phosphoglycerate. This is 2,3-bisphosphoglycerate-independent phosphoglycerate mutase from Mesomycoplasma hyopneumoniae (strain 7448) (Mycoplasma hyopneumoniae).